A 440-amino-acid polypeptide reads, in one-letter code: Adenylosuccinate synthetase (440 aa).

GTP contacts are provided by residues 11–17 (GDEGKGG) and 39–41 (GHT). Asp-12 serves as the catalytic Proton acceptor. Asp-12 and Gly-39 together coordinate Mg(2+). Residues 12–15 (DEGK), 37–40 (NAGH), Thr-127, Arg-141, Gln-230, Thr-245, and Arg-311 each bind IMP. Residue His-40 is the Proton donor of the active site. Position 307–313 (307–313 (TVTGRPR)) interacts with substrate. Residues Arg-313, 339–341 (HLD), and 424–426 (GVG) contribute to the GTP site.

It belongs to the adenylosuccinate synthetase family. Homodimer. Mg(2+) is required as a cofactor.

The protein localises to the cytoplasm. It catalyses the reaction IMP + L-aspartate + GTP = N(6)-(1,2-dicarboxyethyl)-AMP + GDP + phosphate + 2 H(+). Its pathway is purine metabolism; AMP biosynthesis via de novo pathway; AMP from IMP: step 1/2. Plays an important role in the de novo pathway of purine nucleotide biosynthesis. Catalyzes the first committed step in the biosynthesis of AMP from IMP. The chain is Adenylosuccinate synthetase from Halobacterium salinarum (strain ATCC 29341 / DSM 671 / R1).